Reading from the N-terminus, the 76-residue chain is Translation initiation factor IF-1 (76 aa).

One can recognise an S1-like domain in the interval 1–72 (MAKKDVVVMQ…NKGRIVKREK (72 aa)).

Belongs to the IF-1 family. Component of the 30S ribosomal translation pre-initiation complex which assembles on the 30S ribosome in the order IF-2 and IF-3, IF-1 and N-formylmethionyl-tRNA(fMet); mRNA recruitment can occur at any time during PIC assembly.

The protein localises to the cytoplasm. In terms of biological role, one of the essential components for the initiation of protein synthesis. Stabilizes the binding of IF-2 and IF-3 on the 30S subunit to which N-formylmethionyl-tRNA(fMet) subsequently binds. Helps modulate mRNA selection, yielding the 30S pre-initiation complex (PIC). Upon addition of the 50S ribosomal subunit IF-1, IF-2 and IF-3 are released leaving the mature 70S translation initiation complex. The protein is Translation initiation factor IF-1 of Petrotoga mobilis (strain DSM 10674 / SJ95).